The following is a 160-amino-acid chain: Transcription elongation factor GreA (160 aa).

A coiled-coil region spans residues 10 to 37; sequence TLEGKAKLENELQELKTVKRKEVVERIK.

The protein belongs to the GreA/GreB family.

In terms of biological role, necessary for efficient RNA polymerase transcription elongation past template-encoded arresting sites. The arresting sites in DNA have the property of trapping a certain fraction of elongating RNA polymerases that pass through, resulting in locked ternary complexes. Cleavage of the nascent transcript by cleavage factors such as GreA or GreB allows the resumption of elongation from the new 3'terminus. GreA releases sequences of 2 to 3 nucleotides. In Listeria welshimeri serovar 6b (strain ATCC 35897 / DSM 20650 / CCUG 15529 / CIP 8149 / NCTC 11857 / SLCC 5334 / V8), this protein is Transcription elongation factor GreA.